The sequence spans 623 residues: MSRPGVLLPVNGHNFGSQGGPPRVVVWEWLNEHGRWRPYTATVCHHIENALREDGRGRVALGQVDAQLTPYVIDLQTMHQYRQDTGTIRPVRRNFFEPSSAPGKGIVWEWENDAGSWTPYDTEICIAIQNAYEKHHPYLDLTTLGFCYLVHFHSMCQVNRQTHRKRRLRRRMDLAYPLTMGSIPKSQSWPVGSGSGLPCSCPQCLLVNSTRAASNAILASQRIKVPSGPPPALPPPPPPPIHPSGLRQSNTYSGGAAGWGRTGEGMRSTGGIRNGSGFSRSQSVPGAAPYPGQNNLNRPGEQRTSGSSSRASIPPGVPALPVKNLNGSGPVHPALAGMTGILMCAAGLPVCLTRAPKPILHPPPVSKEDIKPVSGVSGICRKTKKKHLKKSKNPEEVVRRYIQKVKSPPDEDCTICMERLVTASGYDGVLSHRGIRAELVGKLGKCNHMYHVLCPVAMYNNGNKDGSLQCPTCKAIYGEKTGTQPPGKMEFHVIPHSLPGFSDCKTIRIVYDIPSGMQGPEHPNPGKKFTARGFPRHCYLPDNDKGRKVLRLLLAAWERRLIFAIGTSSTTGESNTVVWNEIHHKTEFGSNLTGHGYPDPNYLDNVLTELHRQGVMEERSLPY.

WWE domains are found at residues 13 to 93 (HNFG…PVRR) and 94 to 170 (NFFE…RLRR). The interval 224–319 (KVPSGPPPAL…RASIPPGVPA (96 aa)) is disordered. Pro residues predominate over residues 227–242 (SGPPPALPPPPPPPIH). Polar residues predominate over residues 292-311 (GQNNLNRPGEQRTSGSSSRA). An RING-type zinc finger spans residues 413–474 (CTICMERLVT…DGSLQCPTCK (62 aa)).

Belongs to the Deltex family. May form a homo- or heterodimer with other members of the Deltex family. Probably interacts with Notch1. In terms of tissue distribution, specifically expressed in regions undergoing neuronal differentiation. Mainly colocalizes with Notch1.

It catalyses the reaction S-ubiquitinyl-[E2 ubiquitin-conjugating enzyme]-L-cysteine + [acceptor protein]-L-lysine = [E2 ubiquitin-conjugating enzyme]-L-cysteine + N(6)-ubiquitinyl-[acceptor protein]-L-lysine.. The protein operates within protein modification; protein ubiquitination. Regulator of Notch signaling, a signaling pathway involved in cell-cell communications that regulates a broad spectrum of cell-fate determinations. Probably acts both as a positive and negative regulator of Notch, depending on the developmental and cell context. Functions as a ubiquitin ligase protein in vivo, mediating ubiquitination and promoting degradation of MEKK1, suggesting that it may regulate the Notch pathway via some ubiquitin ligase activity. The sequence is that of E3 ubiquitin-protein ligase DTX1 (dtx1) from Xenopus laevis (African clawed frog).